Consider the following 364-residue polypeptide: Putative protein C31H2.4 (364 aa).

2 consecutive VOC domains span residues 6–134 (AIHH…LGEF) and 161–320 (LMDH…IFSK). Residues His164, His248, and Glu331 each contribute to the Fe cation site.

This sequence belongs to the 4HPPD family. Fe cation serves as cofactor.

The chain is Putative protein C31H2.4 from Caenorhabditis elegans.